A 216-amino-acid polypeptide reads, in one-letter code: MEQFTIHTGLVAPLDRENVDTDAIIPKQFLKSIKRTGFGPNLFDEWRYKDVGEPGQDNSKRPLNPDFVLNQPRYQGASVLLARKNFGCGSSREHAPWALQQYGFRAIIAPSFADIFFNNCFKNGLLPIVLTESQVDHLFNETQAFTGYQLTVDLDKQVVVTPGGTAYPFDVTAFRKYCLLNGFDDIGLTLRYADQIKAYEAQRLAKMPWLAHKLVG.

The protein belongs to the LeuD family. LeuD type 1 subfamily. Heterodimer of LeuC and LeuD.

It carries out the reaction (2R,3S)-3-isopropylmalate = (2S)-2-isopropylmalate. It participates in amino-acid biosynthesis; L-leucine biosynthesis; L-leucine from 3-methyl-2-oxobutanoate: step 2/4. Functionally, catalyzes the isomerization between 2-isopropylmalate and 3-isopropylmalate, via the formation of 2-isopropylmaleate. This is 3-isopropylmalate dehydratase small subunit from Ralstonia nicotianae (strain ATCC BAA-1114 / GMI1000) (Ralstonia solanacearum).